The sequence spans 465 residues: Crh-like protein ARB_05253 (465 aa).

The first 21 residues, 1–21 (MKLSLAAALLGALAVSAQTST), serve as a signal peptide directing secretion. One can recognise a GH16 domain in the interval 22–223 (ECNPLKQKCP…WAGGETDFSK (202 aa)). Cys-23 and Cys-30 are oxidised to a cystine. The active-site Nucleophile is Glu-114. Catalysis depends on Glu-118, which acts as the Proton donor. 3 residues coordinate chitin: Glu-118, Trp-200, and Thr-211. 2 disordered regions span residues 261–325 (GQVN…STMT) and 339–442 (TGTG…PGST). Asn-264 carries an N-linked (GlcNAc...) asparagine glycan. The span at 277–287 (SSTLPSSPSTS) shows a compositional bias: low complexity. Residues 304 to 325 (QAPNTGSSPSNTLTNGPSSTMT) show a composition bias toward polar residues. 3 stretches are compositionally biased toward low complexity: residues 339–348 (TGTGGVVTPT), 361–376 (TSRS…SASS), and 383–397 (MTTS…TGTG). A lipid anchor (GPI-anchor amidated serine) is attached at Ser-441. A propeptide spans 442–465 (TGAIHSVSNALLLSFCAIAAWALV) (removed in mature form).

This sequence belongs to the glycosyl hydrolase 16 family. CRH1 subfamily. Post-translationally, the GPI-anchor is attached to the protein in the endoplasmic reticulum and serves to target the protein to the cell surface. There, the glucosamine-inositol phospholipid moiety is cleaved off and the GPI-modified mannoprotein is covalently attached via its lipidless GPI glycan remnant to the 1,6-beta-glucan of the outer cell wall layer.

The protein resides in the secreted. The protein localises to the cell wall. It is found in the membrane. It carries out the reaction Random endo-hydrolysis of N-acetyl-beta-D-glucosaminide (1-&gt;4)-beta-linkages in chitin and chitodextrins.. Its function is as follows. Dual chitinase/transglycosylase that plays a role in cell wall architecture. Chitinase and transglycosylase activities are coupled. Required for the polysaccharide cross-linking at the septa and the cell wall. More specifically, transfers chitin to 1,6-beta-glucan in the cell wall. The polypeptide is Crh-like protein ARB_05253 (Arthroderma benhamiae (strain ATCC MYA-4681 / CBS 112371) (Trichophyton mentagrophytes)).